Reading from the N-terminus, the 915-residue chain is Pentatricopeptide repeat-containing protein At5g65560 (915 aa).

PPR repeat units follow at residues 182 to 216 (IIGC…KVCP), 217 to 251 (NIYT…GLDP), 252 to 286 (DFFT…GCRR), 287 to 321 (NEVA…ECFP), 322 to 356 (TVRT…GIKP), 357 to 391 (NIHT…GLMP), 392 to 426 (NVIT…KLSP), 427 to 460 (NTRT…KVLP), 461 to 495 (DVVT…GLVP), 496 to 530 (DQWT…GVNP), 531 to 565 (NVVM…NCLP), 566 to 600 (NSLT…GLQP), 601 to 635 (TVST…GTKP), 636 to 670 (DAHT…GVSP), 671 to 705 (DLFT…GCEP), 724 to 758 (KQKG…SVTP), 759 to 794 (NAKS…GISP), 795 to 829 (SELV…GHLP), 830 to 864 (QLES…GYYE), and 865 to 899 (DELA…GCKF).

This sequence belongs to the PPR family. P subfamily.

This is Pentatricopeptide repeat-containing protein At5g65560 from Arabidopsis thaliana (Mouse-ear cress).